A 1121-amino-acid chain; its full sequence is tRNA (34-2'-O)-methyltransferase regulator WDR6 (1121 aa).

The residue at position 1 (Met1) is an N-acetylmethionine. WD repeat units follow at residues 53 to 97 (IKRV…VVKI), 105 to 143 (WELW…LYDP), 147 to 189 (CILQ…VWYP), 200 to 238 (APDR…IWKV), 247 to 285 (RVQN…VWSH), 289 to 327 (ILQA…LWHL), 335 to 376 (LGVS…LYDV), 381 to 422 (WEQL…VVPI), 425 to 470 (PTAA…ISAA), 476 to 520 (IFVK…LFPS), 559 to 598 (PVST…FVRD), 604 to 642 (VLRQ…VWNP), 645 to 684 (HEKL…LYRA), 739 to 785 (LTDI…VWGI), 848 to 893 (RNRH…LFLL), 901 to 946 (QLLA…FWDL), 970 to 1012 (GTPS…VFVL), 1036 to 1073 (EEYS…FWRL), and 1079 to 1121 (TFMN…NWYD).

Belongs to the WD repeat WDR6 family. In terms of assembly, interacts with FTSJ1; the interaction is direct, and required for 2'-O-methylation of position 34 in substrate tRNAs. Interacts with IRS4. Interacts with STK11/LKB1. In terms of tissue distribution, ubiquitous.

It localises to the cytoplasm. Its function is as follows. Together with methyltransferase FTSJ1, methylates the 2'-O-ribose of nucleotides at position 34 of the tRNA anticodon loop of substrate tRNAs. Required for the correct positioning of the substrate tRNA for methylation. Required to suppress amino acid starvation-induced autophagy. Enhances the STK11/LKB1-induced cell growth suppression activity. This chain is tRNA (34-2'-O)-methyltransferase regulator WDR6 (WDR6), found in Homo sapiens (Human).